The following is a 464-amino-acid chain: 3-isopropylmalate dehydratase large subunit (464 aa).

Positions 337, 397, and 400 each coordinate [4Fe-4S] cluster.

The protein belongs to the aconitase/IPM isomerase family. LeuC type 1 subfamily. As to quaternary structure, heterodimer of LeuC and LeuD. [4Fe-4S] cluster is required as a cofactor.

The catalysed reaction is (2R,3S)-3-isopropylmalate = (2S)-2-isopropylmalate. The protein operates within amino-acid biosynthesis; L-leucine biosynthesis; L-leucine from 3-methyl-2-oxobutanoate: step 2/4. Functionally, catalyzes the isomerization between 2-isopropylmalate and 3-isopropylmalate, via the formation of 2-isopropylmaleate. This chain is 3-isopropylmalate dehydratase large subunit, found in Bacillus cereus (strain G9842).